A 330-amino-acid polypeptide reads, in one-letter code: MKNIKFIKPFFVEEIDENPISGKFIIKPLERGYGITVGNALRRVLLSSLPGTAIVNVKIQGVEQEFTTIPGVYEDVMTIILNLKKIVFAVDDESDDFEEKLELIAKGPQRLTASSFELPAGVKIINPDHYITTLSDDVCFHMTVTLKKGIGYVGAKDNKVHGENQVGVIAIDSLFTPVVNVSYQVEKKLGNKDELTIEITTNGALLAKEALATAASILVDHFNVLVELSQKPAHVEFVSESKKEAHNSVLDLEIEQLDLSVRLFNSLKRAGIDTVAALVKLSEKEVVKLKSLGRKSFQELKDKFLEYGLEFNDYLKEVLHHSVEEDKDKH.

The interval 1–229 (MKNIKFIKPF…DHFNVLVELS (229 aa)) is alpha N-terminal domain (alpha-NTD). Residues 245–330 (AHNSVLDLEI…HSVEEDKDKH (86 aa)) are alpha C-terminal domain (alpha-CTD).

The protein belongs to the RNA polymerase alpha chain family. In terms of assembly, homodimer. The RNAP catalytic core consists of 2 alpha, 1 beta, 1 beta' and 1 omega subunit. When a sigma factor is associated with the core the holoenzyme is formed, which can initiate transcription.

The catalysed reaction is RNA(n) + a ribonucleoside 5'-triphosphate = RNA(n+1) + diphosphate. Functionally, DNA-dependent RNA polymerase catalyzes the transcription of DNA into RNA using the four ribonucleoside triphosphates as substrates. The sequence is that of DNA-directed RNA polymerase subunit alpha from Onion yellows phytoplasma (strain OY-M).